Here is an 86-residue protein sequence, read N- to C-terminus: Anti-adapter protein IraP (86 aa).

Positions 1 to 36 form a coiled coil; it reads MKNLIAELLLKLAQKEEESKELCAQVEALEIIVTAM.

It belongs to the IraP family. As to quaternary structure, interacts with RssB.

Its subcellular location is the cytoplasm. In terms of biological role, inhibits RpoS proteolysis by regulating RssB activity, thereby increasing the stability of the sigma stress factor RpoS especially during phosphate starvation, but also in stationary phase and during nitrogen starvation. Its effect on RpoS stability is due to its interaction with RssB, which probably blocks the interaction of RssB with RpoS, and the consequent delivery of the RssB-RpoS complex to the ClpXP protein degradation pathway. In Shigella boydii serotype 18 (strain CDC 3083-94 / BS512), this protein is Anti-adapter protein IraP.